The following is a 451-amino-acid chain: Heme sensor protein HssS (451 aa).

The next 2 helical transmembrane spans lie at 9–29 (IAIY…LFTN) and 164–184 (IFLA…VIAS). Positions 186-238 (YSIIKPVTALKNATTRIMKGDFSTPIKQTRHDEIGTLQSRFNTMRQNLGQVDQ) constitute an HAMP domain. A Histidine kinase domain is found at 246-451 (NVSHEVKTPL…KTQFIVKLFI (206 aa)). The residue at position 249 (His249) is a Phosphohistidine; by autocatalysis.

Post-translationally, autophosphorylated.

Its subcellular location is the cell membrane. The enzyme catalyses ATP + protein L-histidine = ADP + protein N-phospho-L-histidine.. Functionally, member of the two-component regulatory system HssS/HssR involved in intracellular heme homeostasis and tempering of staphylococcal virulence. HssS functions as a heme sensor histidine kinase which is autophosphorylated at a histidine residue and transfers its phosphate group to an aspartate residue of HssR. HssR/HssS activates the expression of HrtAB, an efflux pump, in response to extracellular heme, hemin, hemoglobin or blood. The sequence is that of Heme sensor protein HssS (hssS) from Staphylococcus epidermidis (strain ATCC 35984 / DSM 28319 / BCRC 17069 / CCUG 31568 / BM 3577 / RP62A).